A 984-amino-acid polypeptide reads, in one-letter code: Mediator of RNA polymerase II transcription subunit 5 (984 aa).

This sequence belongs to the Mediator complex subunit 5 family. As to quaternary structure, component of the Mediator complex.

Its subcellular location is the nucleus. In terms of biological role, component of the Mediator complex, a coactivator involved in the regulated transcription of nearly all RNA polymerase II-dependent genes. Mediator functions as a bridge to convey information from gene-specific regulatory proteins to the basal RNA polymerase II transcription machinery. Mediator is recruited to promoters by direct interactions with regulatory proteins and serves as a scaffold for the assembly of a functional preinitiation complex with RNA polymerase II and the general transcription factors. The chain is Mediator of RNA polymerase II transcription subunit 5 (NUT1) from Phaeosphaeria nodorum (strain SN15 / ATCC MYA-4574 / FGSC 10173) (Glume blotch fungus).